The following is a 454-amino-acid chain: CCA-adding enzyme (454 aa).

ATP-binding residues include Ser59 and Arg62. Residues Ser59 and Arg62 each coordinate CTP. Mg(2+)-binding residues include Asp71, Asp73, and Asp125. Residues His148, Lys167, and Tyr176 each coordinate ATP. Positions 148, 167, and 176 each coordinate CTP.

Belongs to the tRNA nucleotidyltransferase/poly(A) polymerase family. Archaeal CCA-adding enzyme subfamily. As to quaternary structure, homodimer. It depends on Mg(2+) as a cofactor.

The catalysed reaction is a tRNA precursor + 2 CTP + ATP = a tRNA with a 3' CCA end + 3 diphosphate. It catalyses the reaction a tRNA with a 3' CCA end + 2 CTP + ATP = a tRNA with a 3' CCACCA end + 3 diphosphate. Functionally, catalyzes the addition and repair of the essential 3'-terminal CCA sequence in tRNAs without using a nucleic acid template. Adds these three nucleotides in the order of C, C, and A to the tRNA nucleotide-73, using CTP and ATP as substrates and producing inorganic pyrophosphate. tRNA 3'-terminal CCA addition is required both for tRNA processing and repair. Also involved in tRNA surveillance by mediating tandem CCA addition to generate a CCACCA at the 3' terminus of unstable tRNAs. While stable tRNAs receive only 3'-terminal CCA, unstable tRNAs are marked with CCACCA and rapidly degraded. The polypeptide is CCA-adding enzyme (Methanosarcina barkeri (strain Fusaro / DSM 804)).